A 328-amino-acid polypeptide reads, in one-letter code: Cell division protein ZipA (328 aa).

Topologically, residues 1-6 (MMQDLR) are periplasmic. A helical membrane pass occupies residues 7–27 (LILIVVGAIAIIALLLHGLWT). The Cytoplasmic segment spans residues 28-328 (SRKERSSLFR…REVLDANTIA (301 aa)). The segment covering 61–72 (GEVRVRTSHPQE) has biased composition (basic and acidic residues). Residues 61–183 (GEVRVRTSHP…EPVAPAPEAK (123 aa)) are disordered. Polar residues-rich tracts occupy residues 95–104 (KSAQVKTASR) and 164–174 (APQQHVESQQE).

The protein belongs to the ZipA family. As to quaternary structure, interacts with FtsZ via their C-terminal domains.

The protein localises to the cell inner membrane. Functionally, essential cell division protein that stabilizes the FtsZ protofilaments by cross-linking them and that serves as a cytoplasmic membrane anchor for the Z ring. Also required for the recruitment to the septal ring of downstream cell division proteins. This chain is Cell division protein ZipA, found in Yersinia pestis bv. Antiqua (strain Antiqua).